The sequence spans 515 residues: Iroquois-class homeodomain protein IRX-4 (515 aa).

The segment at residues 144–205 (GTRRKNATRE…NARRRLKKEN (62 aa)) is a DNA-binding region (homeobox; TALE-type). Disordered stretches follow at residues 205–258 (NKMT…ELEL), 278–307 (TPFQ…STTL), and 398–425 (GPTG…RHQD). The span at 214-223 (KCADEKRPYG) shows a compositional bias: basic and acidic residues. Over residues 224-236 (EGEEEEAGEEESR) the composition is skewed to acidic residues. The span at 237–257 (EEPLKSAKSEGHAGKDDKELE) shows a compositional bias: basic and acidic residues. Residues 399–419 (PTGVSATTPASSPAVTAPSGA) are compositionally biased toward low complexity.

This sequence belongs to the TALE/IRO homeobox family. As to quaternary structure, interacts with the vitamin D receptor VDR but doesn't affect its transactivation activity. In terms of tissue distribution, expressed in the developing central nervous system, skin, and vibrissae, but predominantly expressed in the cardiac ventricles of the developing heart. Not expressed in the developing metanephric kidney or adult kidney.

Its subcellular location is the nucleus. Its function is as follows. Likely to be an important mediator of ventricular differentiation during cardiac development. This chain is Iroquois-class homeodomain protein IRX-4 (Irx4), found in Mus musculus (Mouse).